Consider the following 2828-residue polypeptide: Matrix-remodeling-associated protein 5 (2828 aa).

The signal sequence occupies residues 1 to 26 (MPKRAHWGALSVVLILLWGHPRVALA). The region spanning 27-55 (CPHPCACYVPSEVHCTFRSLASVPAGIAK) is the LRRNT domain. 6 LRR repeats span residues 56–77 (HVER…SFAG), 80–101 (KLEL…ALRD), 104–125 (SLQV…TLQG), 128–149 (NLMR…AFNG), 152–173 (SLRL…TFST), and 184–205 (TIRH…MLRN). Residues 217 to 277 (NPWTCDCEMR…HKLKDMTCLK (61 aa)) form the LRRCT domain. N-linked (GlcNAc...) asparagine glycans are attached at residues asparagine 287 and asparagine 321. Ig-like C2-type domains are found at residues 481 to 571 (PSGA…YRVL) and 575 to 669 (PSTQ…ITVT). Disulfide bonds link cysteine 501-cysteine 555 and cysteine 599-cysteine 651. The N-linked (GlcNAc...) asparagine glycan is linked to asparagine 633. Disordered stretches follow at residues 671–715 (KGSG…RRLL), 933–962 (KPTH…EYEP), 1068–1190 (QGGN…APDI), 1204–1275 (AWVD…SSET), and 1367–1389 (EESS…AQPG). The segment covering 695 to 708 (IVEDEGGSGMGDEE) has biased composition (acidic residues). Serine 702 carries O-linked (Xyl...) (chondroitin sulfate) serine glycosylation. The span at 951–962 (SSPEPTSSEYEP) shows a compositional bias: low complexity. The segment covering 1090-1107 (SKSITLPDSTLGIMSSMS) has biased composition (polar residues). The span at 1146 to 1168 (PSRRRPNGRRRLRPNKFRHRHKQ) shows a compositional bias: basic residues. Composition is skewed to polar residues over residues 1169–1190 (TPPT…APDI) and 1204–1214 (AWVDNTVNTPK). Over residues 1229-1243 (TPRRKHGKRPNKHRY) the composition is skewed to basic residues. Asparagine 1403 carries an N-linked (GlcNAc...) asparagine glycan. The LRR 7 repeat unit spans residues 1410–1434 (LKELEDVDFTSEFLSSLTVSTPFHQ). Disordered regions lie at residues 1479 to 1499 (QNHT…PSTI), 1536 to 1566 (NPET…SDQD), 1579 to 1603 (QVFG…HASH), 1669 to 1689 (STTI…KFTD), and 1700 to 1719 (KVFG…KPPS). A compositionally biased stretch (polar residues) spans 1542–1566 (TPVNNEGTQHMSGPNELSTPSSDQD). Asparagine 1735 carries an N-linked (GlcNAc...) asparagine glycan. 10 consecutive Ig-like C2-type domains span residues 1853–1946 (PQIL…LSVT), 1950–2041 (PQIL…IRLH), 2046–2140 (PPVI…LNVQ), 2146–2239 (ARIT…VDVV), 2242–2343 (PAKI…KVVT), 2345–2432 (PATI…KTVW), 2440–2534 (PKIN…LQLT), 2542–2630 (PIFH…RLVS), 2637–2722 (PEAN…PSVT), and 2733–2828 (PRIT…IHVF). 2 cysteine pairs are disulfide-bonded: cysteine 1875-cysteine 1928 and cysteine 1972-cysteine 2025. N-linked (GlcNAc...) asparagine glycans are attached at residues asparagine 2007 and asparagine 2056. 8 cysteine pairs are disulfide-bonded: cysteine 2069-cysteine 2122, cysteine 2168-cysteine 2221, cysteine 2265-cysteine 2324, cysteine 2368-cysteine 2418, cysteine 2466-cysteine 2518, cysteine 2564-cysteine 2616, cysteine 2659-cysteine 2711, and cysteine 2755-cysteine 2810. Asparagine 2693 carries N-linked (GlcNAc...) asparagine glycosylation.

Detected in placenta (at protein level). Detected in cerebrospinal fluid and fibroblasts (at protein level). Highly expressed in kidney, also detected on liver and spleen. Expressed by proximal tubular cells of the kidney (at protein level). Expression highly increases during chronic kidney disease and autosomal dominant polycystic kidney disease, where is detected in cysts.

Its subcellular location is the secreted. Its function is as follows. In kidney, has anti-inflammatory and anti-fibrotic properties by limiting the induction of chemokines, fibronectin and collagen expression in response to TGB1 and pro-inflammatory stimuli. This chain is Matrix-remodeling-associated protein 5 (MXRA5), found in Homo sapiens (Human).